Here is a 604-residue protein sequence, read N- to C-terminus: ATP-dependent RNA helicase dbp6 (604 aa).

Basic and acidic residues predominate over residues 1-16 (MSVEVDKSSHSKPKIE). 2 disordered regions span residues 1–37 (MSVE…HVTA) and 51–70 (FSQA…NERD). Positions 51–60 (FSQAAQQALK) are enriched in low complexity. Positions 149–157 (GFAVQAAVL) match the Q motif motif. Residues 167–379 (GPMYSYGGDV…SLKLHNPRLV (213 aa)) enclose the Helicase ATP-binding domain. Residue 180–187 (AATGSGKT) participates in ATP binding. The DEAD box signature appears at 292-295 (DEAD). The Helicase C-terminal domain maps to 406 to 573 (TLQEYHVSVS…RIKIEFSHIS (168 aa)).

Belongs to the DEAD box helicase family. DDX51/DBP6 subfamily. In terms of assembly, associated with pre-ribosomal particles.

It localises to the nucleus. The protein localises to the nucleolus. The catalysed reaction is ATP + H2O = ADP + phosphate + H(+). Functionally, ATP-binding RNA helicase involved in the biogenesis of 60S ribosomal subunits and is required for the normal formation of 25S and 5.8S rRNAs. This Schizosaccharomyces pombe (strain 972 / ATCC 24843) (Fission yeast) protein is ATP-dependent RNA helicase dbp6 (dbp6).